Here is a 103-residue protein sequence, read N- to C-terminus: UPF0473 protein LCA_0390 (103 aa).

It belongs to the UPF0473 family.

The sequence is that of UPF0473 protein LCA_0390 from Latilactobacillus sakei subsp. sakei (strain 23K) (Lactobacillus sakei subsp. sakei).